We begin with the raw amino-acid sequence, 41 residues long: Photosystem I reaction center subunit IX (41 aa).

Residues 7 to 27 (YLSTAPVLLTIWLTFTAGFII) form a helical membrane-spanning segment.

This sequence belongs to the PsaJ family.

The protein localises to the plastid. It is found in the chloroplast thylakoid membrane. In terms of biological role, may help in the organization of the PsaE and PsaF subunits. The chain is Photosystem I reaction center subunit IX from Phaeodactylum tricornutum (strain CCAP 1055/1).